Here is a 183-residue protein sequence, read N- to C-terminus: Adenylate kinase (183 aa).

12–17 (GAGKGT) is a binding site for ATP. The NMP stretch occupies residues 32–61 (STGDLLRSEVAAGSELGKEAEAVMNRGELV). AMP-binding positions include Thr-33, Arg-38, 59 to 61 (ELV), 86 to 89 (GFPR), and Gln-93. Positions 127–133 (SRGRADD) are LID. Position 128 (Arg-128) interacts with ATP. 2 residues coordinate AMP: Arg-130 and Arg-141. ATP is bound at residue Gly-169.

The protein belongs to the adenylate kinase family. In terms of assembly, monomer.

It localises to the cytoplasm. It carries out the reaction AMP + ATP = 2 ADP. It participates in purine metabolism; AMP biosynthesis via salvage pathway; AMP from ADP: step 1/1. Catalyzes the reversible transfer of the terminal phosphate group between ATP and AMP. Plays an important role in cellular energy homeostasis and in adenine nucleotide metabolism. In Synechococcus sp. (strain CC9902), this protein is Adenylate kinase.